Reading from the N-terminus, the 542-residue chain is CTP synthase (542 aa).

Residues 1 to 266 (MATNYIFVTG…DDLICQRFRL (266 aa)) form an amidoligase domain region. Ser14 serves as a coordination point for CTP. Ser14 lines the UTP pocket. ATP contacts are provided by residues 15 to 20 (SLGKGI) and Asp72. Asp72 and Glu140 together coordinate Mg(2+). Residues 147–149 (DIE), 187–192 (KTKPTQ), and Lys223 contribute to the CTP site. Residues 187-192 (KTKPTQ) and Lys223 contribute to the UTP site. 239-241 (KDV) provides a ligand contact to ATP. The 252-residue stretch at 291 to 542 (TIGMVGKYVE…VKAAKENQKK (252 aa)) folds into the Glutamine amidotransferase type-1 domain. Gly352 is a binding site for L-glutamine. The Nucleophile; for glutamine hydrolysis role is filled by Cys379. Residues 380–383 (LGMQ), Glu403, and Arg470 each bind L-glutamine. Active-site residues include His515 and Glu517.

The protein belongs to the CTP synthase family. In terms of assembly, homotetramer.

The enzyme catalyses UTP + L-glutamine + ATP + H2O = CTP + L-glutamate + ADP + phosphate + 2 H(+). The catalysed reaction is L-glutamine + H2O = L-glutamate + NH4(+). It catalyses the reaction UTP + NH4(+) + ATP = CTP + ADP + phosphate + 2 H(+). The protein operates within pyrimidine metabolism; CTP biosynthesis via de novo pathway; CTP from UDP: step 2/2. With respect to regulation, allosterically activated by GTP, when glutamine is the substrate; GTP has no effect on the reaction when ammonia is the substrate. The allosteric effector GTP functions by stabilizing the protein conformation that binds the tetrahedral intermediate(s) formed during glutamine hydrolysis. Inhibited by the product CTP, via allosteric rather than competitive inhibition. In terms of biological role, catalyzes the ATP-dependent amination of UTP to CTP with either L-glutamine or ammonia as the source of nitrogen. Regulates intracellular CTP levels through interactions with the four ribonucleotide triphosphates. This Mannheimia succiniciproducens (strain KCTC 0769BP / MBEL55E) protein is CTP synthase.